The chain runs to 335 residues: Glycerol-3-phosphate dehydrogenase [NAD(P)+] (335 aa).

NADPH-binding residues include Ser10, Phe11, Arg31, and Lys105. Residues Lys105, Gly136, and Ser138 each contribute to the sn-glycerol 3-phosphate site. Ala140 is a binding site for NADPH. Positions 191, 244, 254, 255, and 256 each coordinate sn-glycerol 3-phosphate. Catalysis depends on Lys191, which acts as the Proton acceptor. Arg255 contributes to the NADPH binding site. Residues Val279 and Glu281 each coordinate NADPH.

The protein belongs to the NAD-dependent glycerol-3-phosphate dehydrogenase family.

It localises to the cytoplasm. The enzyme catalyses sn-glycerol 3-phosphate + NAD(+) = dihydroxyacetone phosphate + NADH + H(+). It carries out the reaction sn-glycerol 3-phosphate + NADP(+) = dihydroxyacetone phosphate + NADPH + H(+). It functions in the pathway membrane lipid metabolism; glycerophospholipid metabolism. Its function is as follows. Catalyzes the reduction of the glycolytic intermediate dihydroxyacetone phosphate (DHAP) to sn-glycerol 3-phosphate (G3P), the key precursor for phospholipid synthesis. This Leptospira borgpetersenii serovar Hardjo-bovis (strain JB197) protein is Glycerol-3-phosphate dehydrogenase [NAD(P)+].